We begin with the raw amino-acid sequence, 499 residues long: Lysine--tRNA ligase (499 aa).

Residues Glu408 and Glu415 each contribute to the Mg(2+) site.

This sequence belongs to the class-II aminoacyl-tRNA synthetase family. As to quaternary structure, homodimer. Mg(2+) serves as cofactor.

It is found in the cytoplasm. It catalyses the reaction tRNA(Lys) + L-lysine + ATP = L-lysyl-tRNA(Lys) + AMP + diphosphate. The protein is Lysine--tRNA ligase of Bacillus cereus (strain ATCC 10987 / NRS 248).